The chain runs to 242 residues: Flavin prenyltransferase PAD1, mitochondrial (242 aa).

A mitochondrion-targeting transit peptide spans 1–58; the sequence is MLLFPRRTNIAFFKTTGIFANFPLLGRTITTSPSFLTHKLSKEVTRASTSPPRPKRIV. FMN contacts are provided by residues 63 to 65, S89, 140 to 143, and R175; these read GAT and SMKS. Residues Y205 and R221 each coordinate dimethylallyl phosphate.

This sequence belongs to the UbiX/PAD1 family. As to quaternary structure, oligomer.

The protein resides in the mitochondrion. It catalyses the reaction dimethylallyl phosphate + FMNH2 = prenylated FMNH2 + phosphate. Functionally, flavin prenyltransferase that catalyzes the synthesis of the prenylated FMN cofactor (prenyl-FMN) for the ferulic acid decarboxylase FDC1/ubiD. The prenyltransferase is metal-independent and links a dimethylallyl moiety from dimethylallyl monophosphate (DMAP) to the flavin N5 and C6 atoms of FMN. Involved in the decarboxylation of phenylacrylic acids like ferulic acid, p-coumaric acid or cinnamic acid, producing the corresponding vinyl derivatives which play the role of aroma metabolites. Also involved in the degradation of the food preservative sorbic acid (2,4-hexadienoic acid) to a volatile hydrocarbon, 1,3-pentadiene. Not essential for ubiquinone synthesis. Can rescue Q biosynthesis in E.coli strains lacking UbiX. Has mRNA binding activity. This chain is Flavin prenyltransferase PAD1, mitochondrial, found in Saccharomyces cerevisiae (strain ATCC 204508 / S288c) (Baker's yeast).